A 601-amino-acid chain; its full sequence is Abscisic acid cluster transcription factor abl7 (601 aa).

The zn(2)-C6 fungal-type DNA-binding region spans 13–40 (CDECRRRKLKCDRVRPQCGTCALSESEC).

It localises to the nucleus. Functionally, transcription factor that regulates the expression of the gene cluster that mediates the biosynthesis of abscisic acid (ABA), a phytohormone that acts antagonistically toward salicylic acid (SA), jasmonic acid (JA) and ethylene (ETH) signaling, to impede plant defense responses. This Leptosphaeria maculans (strain JN3 / isolate v23.1.3 / race Av1-4-5-6-7-8) (Blackleg fungus) protein is Abscisic acid cluster transcription factor abl7.